The primary structure comprises 338 residues: Mitoferrin-1 (338 aa).

The segment at 1 to 37 (MELRRGGVGSQAAGRRMDGDCRDGGCGSKDAGSEDYE) is disordered. Solcar repeat units lie at residues 43 to 131 (ASVS…MKRT), 141 to 225 (NSHL…LQEQ), and 232 to 326 (YNPQ…FKYF). Transmembrane regions (helical) follow at residues 45 to 64 (VSTHMTAGAMAGILEHSIMY), 106 to 125 (GLNVMMMGAGPAHAMYFACY), 143 to 162 (HLANGIAGSMATLLHDAVMN), 200 to 219 (SYTTQLTMNIPFQSIHFITY), 234 to 253 (PQSHIISGGLAGALAAAATT), and 301 to 320 (GIQARVIYQMPSTAISWSVY).

The protein belongs to the mitochondrial carrier (TC 2.A.29) family. As to quaternary structure, interacts with ACB10; this interaction stabilizes SLC25A37 and enhances the function of SLC25A37 to import mitochondrial iron during erythroid differentiation.

It is found in the mitochondrion inner membrane. The enzyme catalyses Fe(2+)(in) = Fe(2+)(out). Mitochondrial iron transporter that specifically mediates iron uptake in developing erythroid cells, thereby playing an essential role in heme biosynthesis. The chain is Mitoferrin-1 (Slc25a37) from Rattus norvegicus (Rat).